A 155-amino-acid chain; its full sequence is D-aminoacyl-tRNA deacylase (155 aa).

Positions 147 to 148 match the Gly-cisPro motif, important for rejection of L-amino acids motif; sequence GP.

This sequence belongs to the DTD family. Homodimer.

The protein resides in the cytoplasm. The catalysed reaction is glycyl-tRNA(Ala) + H2O = tRNA(Ala) + glycine + H(+). The enzyme catalyses a D-aminoacyl-tRNA + H2O = a tRNA + a D-alpha-amino acid + H(+). Its function is as follows. An aminoacyl-tRNA editing enzyme that deacylates mischarged D-aminoacyl-tRNAs. Also deacylates mischarged glycyl-tRNA(Ala), protecting cells against glycine mischarging by AlaRS. Acts via tRNA-based rather than protein-based catalysis; rejects L-amino acids rather than detecting D-amino acids in the active site. By recycling D-aminoacyl-tRNA to D-amino acids and free tRNA molecules, this enzyme counteracts the toxicity associated with the formation of D-aminoacyl-tRNA entities in vivo and helps enforce protein L-homochirality. This Corynebacterium urealyticum (strain ATCC 43042 / DSM 7109) protein is D-aminoacyl-tRNA deacylase.